Reading from the N-terminus, the 318-residue chain is CRISPR-associated endonuclease Cas1 1 (318 aa).

Mn(2+) contacts are provided by glutamate 160, histidine 225, and glutamate 240.

Belongs to the CRISPR-associated endonuclease Cas1 family. In terms of assembly, homodimer, forms a heterotetramer with a Cas2 homodimer. The cofactor is Mg(2+). Requires Mn(2+) as cofactor.

CRISPR (clustered regularly interspaced short palindromic repeat), is an adaptive immune system that provides protection against mobile genetic elements (viruses, transposable elements and conjugative plasmids). CRISPR clusters contain spacers, sequences complementary to antecedent mobile elements, and target invading nucleic acids. CRISPR clusters are transcribed and processed into CRISPR RNA (crRNA). Acts as a dsDNA endonuclease. Involved in the integration of spacer DNA into the CRISPR cassette. The chain is CRISPR-associated endonuclease Cas1 1 from Thermodesulfovibrio yellowstonii (strain ATCC 51303 / DSM 11347 / YP87).